The sequence spans 468 residues: ATP synthase subunit beta (468 aa).

155 to 162 (GGAGVGKT) serves as a coordination point for ATP.

Belongs to the ATPase alpha/beta chains family. F-type ATPases have 2 components, CF(1) - the catalytic core - and CF(0) - the membrane proton channel. CF(1) has five subunits: alpha(3), beta(3), gamma(1), delta(1), epsilon(1). CF(0) has three main subunits: a(1), b(2) and c(9-12). The alpha and beta chains form an alternating ring which encloses part of the gamma chain. CF(1) is attached to CF(0) by a central stalk formed by the gamma and epsilon chains, while a peripheral stalk is formed by the delta and b chains.

It is found in the cell membrane. The catalysed reaction is ATP + H2O + 4 H(+)(in) = ADP + phosphate + 5 H(+)(out). In terms of biological role, produces ATP from ADP in the presence of a proton gradient across the membrane. The catalytic sites are hosted primarily by the beta subunits. This chain is ATP synthase subunit beta, found in Streptococcus mutans serotype c (strain ATCC 700610 / UA159).